Reading from the N-terminus, the 351-residue chain is Dihydroorotate dehydrogenase (quinone) (351 aa).

Residues 61-65 (AGLDK) and T85 each bind FMN. K65 contacts substrate. 110-114 (NRMGF) contributes to the substrate binding site. Residues N139 and N172 each contribute to the FMN site. N172 contributes to the substrate binding site. S175 functions as the Nucleophile in the catalytic mechanism. N177 serves as a coordination point for substrate. Positions 217 and 245 each coordinate FMN. A substrate-binding site is contributed by 246-247 (NT). FMN is bound by residues G268, G297, and 318–319 (YT).

It belongs to the dihydroorotate dehydrogenase family. Type 2 subfamily. Monomer. Requires FMN as cofactor.

It is found in the cell membrane. The enzyme catalyses (S)-dihydroorotate + a quinone = orotate + a quinol. Its pathway is pyrimidine metabolism; UMP biosynthesis via de novo pathway; orotate from (S)-dihydroorotate (quinone route): step 1/1. Catalyzes the conversion of dihydroorotate to orotate with quinone as electron acceptor. The sequence is that of Dihydroorotate dehydrogenase (quinone) from Xylella fastidiosa (strain M23).